Here is a 474-residue protein sequence, read N- to C-terminus: Probable diacyglycerol O-acyltransferase Tgs4 (474 aa).

The active-site Proton acceptor is the His-135.

This sequence belongs to the long-chain O-acyltransferase family.

The enzyme catalyses an acyl-CoA + a 1,2-diacyl-sn-glycerol = a triacyl-sn-glycerol + CoA. It functions in the pathway glycerolipid metabolism; triacylglycerol biosynthesis. Required for maintaining the appropriate mycolic acid composition and permeability of the envelope on its exposure to acidic pH. This chain is Probable diacyglycerol O-acyltransferase Tgs4 (tgs4), found in Mycobacterium tuberculosis (strain CDC 1551 / Oshkosh).